Reading from the N-terminus, the 329-residue chain is Prostaglandin reductase 1 (329 aa).

At Thr18 the chain carries Phosphothreonine. Ser20 carries the phosphoserine modification. Residues 152–155 (GAVG), Lys178, Tyr193, Asn217, 239–245 (CGAISTY), 270–272 (FVV), and Asn321 contribute to the NADP(+) site. Residue Lys178 is modified to N6-(2-hydroxyisobutyryl)lysine; alternate. Lys178 carries the N6-acetyllysine; alternate modification.

It belongs to the NADP-dependent oxidoreductase L4BD family. As to quaternary structure, monomer or homodimer. As to expression, high expression in the kidney, liver, and intestine but not in leukocytes.

It is found in the cytoplasm. It carries out the reaction 13,14-dihydro-15-oxo-prostaglandin E1 + NADP(+) = 15-oxoprostaglandin E1 + NADPH + H(+). It catalyses the reaction 13,14-dihydro-15-oxo-prostaglandin E2 + NADP(+) = 15-oxoprostaglandin E2 + NADPH + H(+). The catalysed reaction is 13,14-dihydro-15-oxo-prostaglandin F1alpha + NADP(+) = 15-oxoprostaglandin F1alpha + NADPH + H(+). The enzyme catalyses 13,14-dihydro-15-oxo-PGF2alpha + NADP(+) = 15-oxoprostaglandin F2alpha + NADPH + H(+). It carries out the reaction leukotriene B4 + NADP(+) = 12-oxo-leukotriene B4 + NADPH + H(+). It catalyses the reaction 20-hydroxy-leukotriene B4 + NADP(+) = 12-oxo-20-hydroxy-leukotriene B4 + NADPH + H(+). The catalysed reaction is 6-trans-leukotriene B4 + NADP(+) = 12-oxo-(5S)-hydroxy-(6E,8E,10E,14Z)-eicosatetraenoate + NADPH + H(+). The enzyme catalyses (5S,12S)-dihydroxy-(6E,10E,12E,14Z)-eicosatetraenoate + NADP(+) = 12-oxo-(5S)-hydroxy-(6E,8E,10E,14Z)-eicosatetraenoate + NADPH + H(+). It carries out the reaction an n-alkanal + NADP(+) = an alk-2-enal + NADPH + H(+). It catalyses the reaction hexanal + NADP(+) = (E)-hex-2-enal + NADPH + H(+). The catalysed reaction is octanal + NADP(+) = (2E)-octenal + NADPH + H(+). The enzyme catalyses decanal + NADP(+) = (2E)-decenal + NADPH + H(+). It carries out the reaction dodecanal + NADP(+) = (2E)-dodecenal + NADPH + H(+). It catalyses the reaction 4-hydroxynonanal + NADP(+) = (E)-4-hydroxynon-2-enal + NADPH + H(+). The catalysed reaction is pentan-2-one + NADP(+) = (E)-pent-3-en-2-one + NADPH + H(+). The enzyme catalyses nonan-2-one + NADP(+) = (3E)-nonen-2-one + NADPH + H(+). Functionally, NAD(P)H-dependent oxidoreductase involved in metabolic inactivation of pro- and anti-inflammatory eicosanoids: prostaglandins (PG), leukotrienes (LT) and lipoxins (LX). Catalyzes with high efficiency the reduction of the 13,14 double bond of 15-oxoPGs, including 15-oxo-PGE1, 15-oxo-PGE2, 15-oxo-PGF1-alpha and 15-oxo-PGF2-alpha. Catalyzes with lower efficiency the oxidation of the hydroxyl group at C12 of LTB4 and its derivatives, converting them into biologically less active 12-oxo-LTB4 metabolites. Reduces 15-oxo-LXA4 to 13,14 dihydro-15-oxo-LXA4, enhancing neutrophil recruitment at the inflammatory site. May play a role in metabolic detoxification of alkenals and ketones. Reduces alpha,beta-unsaturated alkenals and ketones, particularly those with medium-chain length, showing highest affinity toward (2E)-decenal and (3E)-3-nonen-2-one. May inactivate 4-hydroxy-2-nonenal, a cytotoxic lipid constituent of oxidized low-density lipoprotein particles. This is Prostaglandin reductase 1 (PTGR1) from Homo sapiens (Human).